We begin with the raw amino-acid sequence, 239 residues long: Small ribosomal subunit protein eS6B (239 aa).

3 positions are modified to phosphoserine: Ser-148, Ser-235, and Ser-236.

This sequence belongs to the eukaryotic ribosomal protein eS6 family. As to quaternary structure, component of the small ribosomal subunit (SSU). Mature yeast ribosomes consist of a small (40S) and a large (60S) subunit. The 40S small subunit contains 1 molecule of ribosomal RNA (18S rRNA) and at least 33 different proteins. The large 60S subunit contains 3 rRNA molecules (25S, 5.8S and 5S rRNA) and at least 46 different proteins. Interacts with snoRNA U3. uS11 interacts with MPP10. Component of the ribosomal small subunit (SSU) processome composed of at least 40 protein subunits and snoRNA U3.

Its subcellular location is the cytoplasm. Component of the ribosome, a large ribonucleoprotein complex responsible for the synthesis of proteins in the cell. The small ribosomal subunit (SSU) binds messenger RNAs (mRNAs) and translates the encoded message by selecting cognate aminoacyl-transfer RNA (tRNA) molecules. The large subunit (LSU) contains the ribosomal catalytic site termed the peptidyl transferase center (PTC), which catalyzes the formation of peptide bonds, thereby polymerizing the amino acids delivered by tRNAs into a polypeptide chain. The nascent polypeptides leave the ribosome through a tunnel in the LSU and interact with protein factors that function in enzymatic processing, targeting, and the membrane insertion of nascent chains at the exit of the ribosomal tunnel. eS6 is involved in nucleolar processing of pre-18S ribosomal RNA and ribosome assembly. This is Small ribosomal subunit protein eS6B (rps602) from Schizosaccharomyces pombe (strain 972 / ATCC 24843) (Fission yeast).